Here is a 277-residue protein sequence, read N- to C-terminus: Large ribosomal subunit protein uL2 (277 aa).

The segment at 219 to 277 is disordered; sequence TVRGSVMNPNDHPHGGGEGRSPIGHPSPRTPWGKPALGYKTRKNKKYSDRFIVKRRHDK.

Belongs to the universal ribosomal protein uL2 family. Part of the 50S ribosomal subunit. Forms a bridge to the 30S subunit in the 70S ribosome.

Its function is as follows. One of the primary rRNA binding proteins. Required for association of the 30S and 50S subunits to form the 70S ribosome, for tRNA binding and peptide bond formation. It has been suggested to have peptidyltransferase activity; this is somewhat controversial. Makes several contacts with the 16S rRNA in the 70S ribosome. The chain is Large ribosomal subunit protein uL2 from Clostridium botulinum (strain Okra / Type B1).